Reading from the N-terminus, the 72-residue chain is Heat-stable enterotoxin A3/A4 (72 aa).

A signal peptide spans 1–19; it reads MKKSILFIFLSVLSFSPFA. A propeptide spanning residues 20–53 is cleaved from the precursor; that stretch reads QDAKPVESSKEKITLESKKCNIAKKSNKSGPESM. Disulfide bonds link cysteine 59/cysteine 64, cysteine 60/cysteine 68, and cysteine 63/cysteine 71.

Belongs to the heat-stable enterotoxin family.

It is found in the secreted. Its function is as follows. Toxin which activates the particulate form of guanylate cyclase and increases cyclic GMP levels within the host intestinal epithelial cells. In Escherichia coli, this protein is Heat-stable enterotoxin A3/A4 (sta3).